Here is a 739-residue protein sequence, read N- to C-terminus: Probable beta-glucosidase L (739 aa).

The first 17 residues, 1–17 (MQNLFLSLLAAAVTVHA), serve as a signal peptide directing secretion. A glycan (N-linked (GlcNAc...) asparagine) is linked at Asn-224. Residue Asp-252 is part of the active site. Asn-398 carries N-linked (GlcNAc...) asparagine glycosylation.

It belongs to the glycosyl hydrolase 3 family.

Its subcellular location is the secreted. It carries out the reaction Hydrolysis of terminal, non-reducing beta-D-glucosyl residues with release of beta-D-glucose.. Its pathway is glycan metabolism; cellulose degradation. In terms of biological role, beta-glucosidases are one of a number of cellulolytic enzymes involved in the degradation of cellulosic biomass. Catalyzes the last step releasing glucose from the inhibitory cellobiose. In Neosartorya fischeri (strain ATCC 1020 / DSM 3700 / CBS 544.65 / FGSC A1164 / JCM 1740 / NRRL 181 / WB 181) (Aspergillus fischerianus), this protein is Probable beta-glucosidase L (bglL).